The chain runs to 463 residues: Cysteine--tRNA ligase (463 aa).

Zn(2+) is bound at residue C29. Residues 31-41 carry the 'HIGH' region motif; sequence PTVYDFAHIGN. 3 residues coordinate Zn(2+): C227, H252, and E256. The 'KMSKS' region motif lies at 285–289; sequence KMSKS. Residue K288 participates in ATP binding.

The protein belongs to the class-I aminoacyl-tRNA synthetase family. As to quaternary structure, monomer. Requires Zn(2+) as cofactor.

It localises to the cytoplasm. The catalysed reaction is tRNA(Cys) + L-cysteine + ATP = L-cysteinyl-tRNA(Cys) + AMP + diphosphate. The polypeptide is Cysteine--tRNA ligase (Rhodopseudomonas palustris (strain ATCC BAA-98 / CGA009)).